The following is a 214-amino-acid chain: Large ribosomal subunit protein uL3 (214 aa).

Residues 134-153 (ATHGNSLSHRAPGSIGQNQT) are disordered. Gln152 carries the N5-methylglutamine modification.

It belongs to the universal ribosomal protein uL3 family. As to quaternary structure, part of the 50S ribosomal subunit. Forms a cluster with proteins L14 and L19. Methylated by PrmB.

Functionally, one of the primary rRNA binding proteins, it binds directly near the 3'-end of the 23S rRNA, where it nucleates assembly of the 50S subunit. The protein is Large ribosomal subunit protein uL3 of Buchnera aphidicola subsp. Baizongia pistaciae (strain Bp).